A 115-amino-acid chain; its full sequence is Anamorsin homolog 2 (115 aa).

Residues 30 to 115 (VKEATKGEDC…KVKLNLTDDI (86 aa)) are disordered. 4 residues coordinate [2Fe-2S] cluster: Cys-39, Cys-46, Cys-49, and Cys-51. A fe-S binding site A region spans residues 39-51 (CTTRRRACKNCTC). The [4Fe-4S] cluster site is built by Cys-77, Cys-80, Cys-88, and Cys-91. Short sequence motifs (cx2C motif) lie at residues 77 to 80 (CGNC) and 88 to 91 (CATC). The interval 77–91 (CGNCAKGDAFRCATC) is fe-S binding site B.

The protein belongs to the anamorsin family. In terms of assembly, monomer. Requires [2Fe-2S] cluster as cofactor. It depends on [4Fe-4S] cluster as a cofactor.

The protein resides in the cytoplasm. The protein localises to the mitochondrion intermembrane space. In terms of biological role, component of the cytosolic iron-sulfur (Fe-S) protein assembly (CIA) machinery. Required for the maturation of extramitochondrial Fe-S proteins. Part of an electron transfer chain functioning in an early step of cytosolic Fe-S biogenesis, facilitating the de novo assembly of a [4Fe-4S] cluster on the cytosolic Fe-S scaffold complex. Electrons are transferred from NADPH via a FAD- and FMN-containing diflavin oxidoreductase. Together with the diflavin oxidoreductase, also required for the assembly of the diferric tyrosyl radical cofactor of ribonucleotide reductase (RNR), probably by providing electrons for reduction during radical cofactor maturation in the catalytic small subunit. In Trypanosoma cruzi (strain CL Brener), this protein is Anamorsin homolog 2.